The following is a 394-amino-acid chain: Probable tRNA sulfurtransferase (394 aa).

The 108-residue stretch at Asp-61–Ile-168 folds into the THUMP domain. Residues Leu-185 to Leu-186, Tyr-210 to Phe-211, Arg-267, Gly-289, and Gln-298 each bind ATP.

This sequence belongs to the ThiI family.

It localises to the cytoplasm. It carries out the reaction [ThiI sulfur-carrier protein]-S-sulfanyl-L-cysteine + a uridine in tRNA + 2 reduced [2Fe-2S]-[ferredoxin] + ATP + H(+) = [ThiI sulfur-carrier protein]-L-cysteine + a 4-thiouridine in tRNA + 2 oxidized [2Fe-2S]-[ferredoxin] + AMP + diphosphate. The enzyme catalyses [ThiS sulfur-carrier protein]-C-terminal Gly-Gly-AMP + S-sulfanyl-L-cysteinyl-[cysteine desulfurase] + AH2 = [ThiS sulfur-carrier protein]-C-terminal-Gly-aminoethanethioate + L-cysteinyl-[cysteine desulfurase] + A + AMP + 2 H(+). Its pathway is cofactor biosynthesis; thiamine diphosphate biosynthesis. In terms of biological role, catalyzes the ATP-dependent transfer of a sulfur to tRNA to produce 4-thiouridine in position 8 of tRNAs, which functions as a near-UV photosensor. Also catalyzes the transfer of sulfur to the sulfur carrier protein ThiS, forming ThiS-thiocarboxylate. This is a step in the synthesis of thiazole, in the thiamine biosynthesis pathway. The sulfur is donated as persulfide by IscS. The chain is Probable tRNA sulfurtransferase from Agathobacter rectalis (strain ATCC 33656 / DSM 3377 / JCM 17463 / KCTC 5835 / VPI 0990) (Eubacterium rectale).